The sequence spans 100 residues: Urease subunit gamma (100 aa).

Belongs to the urease gamma subunit family. In terms of assembly, heterotrimer of UreA (gamma), UreB (beta) and UreC (alpha) subunits. Three heterotrimers associate to form the active enzyme.

It is found in the cytoplasm. The enzyme catalyses urea + 2 H2O + H(+) = hydrogencarbonate + 2 NH4(+). The protein operates within nitrogen metabolism; urea degradation; CO(2) and NH(3) from urea (urease route): step 1/1. This is Urease subunit gamma from Klebsiella pneumoniae.